We begin with the raw amino-acid sequence, 128 residues long: MRSAFYIFLVVAVLARCSVVAAFTNADDSQLLSKVSPDFAANDMTYTVSRKRLLRVAGREDDDATTDEEDRGFTSIVDVIKRSDAAEALHKLSKASAKKVKKAGKAVKELTAKEKEALKALLALKDGN.

The signal sequence occupies residues 1–22; the sequence is MRSAFYIFLVVAVLARCSVVAA. The RxLR-dEER motif lies at 52 to 71; that stretch reads RLLRVAGREDDDATTDEEDR.

The protein belongs to the RxLR effector family.

It is found in the secreted. Its subcellular location is the host nucleus. In terms of biological role, effector that suppresses flg22-induced post-translational MAP kinase activation both tomato and Arabidopsis. The perception of highly conserved pathogen- or microbe-associated molecular patterns (PAMPs/MAMPs), such as flg22, triggers converging signaling pathways recruiting MAP kinase cascades and inducing transcriptional re-programming, yielding a generic antimicrobial response. In Phytophthora infestans (strain T30-4) (Potato late blight agent), this protein is RxLR effector protein SFI2.